Consider the following 98-residue polypeptide: NADH-ubiquinone oxidoreductase chain 4L (98 aa).

3 helical membrane passes run 1–21, 29–49, and 61–81; these read MSLI…GLLM, ALLC…LTIL, and IILL…LVMI.

Belongs to the complex I subunit 4L family. Core subunit of respiratory chain NADH dehydrogenase (Complex I) which is composed of 45 different subunits.

Its subcellular location is the mitochondrion inner membrane. It carries out the reaction a ubiquinone + NADH + 5 H(+)(in) = a ubiquinol + NAD(+) + 4 H(+)(out). Core subunit of the mitochondrial membrane respiratory chain NADH dehydrogenase (Complex I) which catalyzes electron transfer from NADH through the respiratory chain, using ubiquinone as an electron acceptor. Part of the enzyme membrane arm which is embedded in the lipid bilayer and involved in proton translocation. The protein is NADH-ubiquinone oxidoreductase chain 4L (MT-ND4L) of Berardius bairdii (Baird's beaked whale).